Consider the following 32-residue polypeptide: Calcitonin (32 aa).

An intrachain disulfide couples Cys-1 to Cys-7. Proline amide is present on Pro-32.

It belongs to the calcitonin family.

Its subcellular location is the secreted. Causes a rapid but short-lived drop in the level of calcium and phosphate in blood by promoting the incorporation of those ions in the bones. This chain is Calcitonin, found in Anguilla japonica (Japanese eel).